Consider the following 331-residue polypeptide: WW domain-containing protein C2F3.14c (331 aa).

Positions 1-184 (MSSSKDCKAT…TNENQAQPSI (184 aa)) are disordered. The span at 9–22 (ATSNVDQTIPASNV) shows a compositional bias: polar residues. Positions 23-41 (NSGDFISSNTSSSNSENSN) are enriched in low complexity. Residues 57 to 89 (SFISENTPKNTFESTQTYENLESISKNEPTSEA) show a composition bias toward polar residues. Pro residues predominate over residues 105–145 (REPPLPNEPVPEEPLPGEPPLPDEPVPEEPLPGEPPLPNEP). Residues 158 to 184 (SDETVSETSKNDTSNSPTNENQAQPSI) show a composition bias toward polar residues. One can recognise a WW domain in the interval 187-220 (SEGHRIAAIWDPSQQAYYFWDTLTNTTSWNNPLE). The disordered stretch occupies residues 290 to 309 (YTRKEMEQMKRRTKEKKEMK). The segment covering 292–309 (RKEMEQMKRRTKEKKEMK) has biased composition (basic and acidic residues).

The protein resides in the nucleus. This chain is WW domain-containing protein C2F3.14c, found in Schizosaccharomyces pombe (strain 972 / ATCC 24843) (Fission yeast).